The primary structure comprises 261 residues: Indole-3-glycerol phosphate synthase (261 aa).

Belongs to the TrpC family.

It catalyses the reaction 1-(2-carboxyphenylamino)-1-deoxy-D-ribulose 5-phosphate + H(+) = (1S,2R)-1-C-(indol-3-yl)glycerol 3-phosphate + CO2 + H2O. It participates in amino-acid biosynthesis; L-tryptophan biosynthesis; L-tryptophan from chorismate: step 4/5. This Campylobacter concisus (strain 13826) protein is Indole-3-glycerol phosphate synthase.